The sequence spans 437 residues: Eukaryotic peptide chain release factor subunit 1 (437 aa).

Alanine 2 carries the N-acetylalanine modification. Positions asparagine 61–serine 64 match the NIKS motif; plays an important role in translational termination motif. Lysine 63 carries the 4-hydroxylysine modification. Lysine 87 is covalently cross-linked (Glycyl lysine isopeptide (Lys-Gly) (interchain with G-Cter in SUMO2)). Glutamine 185 carries the post-translational modification N5-methylglutamine. Lysine 279 is covalently cross-linked (Glycyl lysine isopeptide (Lys-Gly) (interchain with G-Cter in ubiquitin)). At threonine 347 the chain carries Phosphothreonine. A Glycyl lysine isopeptide (Lys-Gly) (interchain with G-Cter in SUMO2) cross-link involves residue lysine 404.

It belongs to the eukaryotic release factor 1 family. Component of the eRF1-eRF3-GTP ternary complex, composed of ETF1/ERF1 and eRF3 (GSPT1/ERF3A or GSPT2/ERF3B) and GTP. Component of the transient SURF (SMG1-UPF1-eRF1-eRF3) complex. Interacts with JMJD4. The ETF1-GSPT1 complex interacts with JMJD4. Hydroxylation at Lys-63 by JMJD4 promotes its translational termination efficiency. Post-translationally, methylated at Gln-185 by N6AMT1. In terms of processing, ubiquitinated at Lys-279 via 'Lys-6'-linked polyubiquitin chains by RNF14 and RNF25 in response to ribosome collisions (ribosome stalling), leading to its degradation by the proteasome and rescue of stalled ribosomes.

It is found in the cytoplasm. Functionally, component of the eRF1-eRF3-GTP ternary complex, a ternary complex that mediates translation termination in response to the termination codons. The eRF1-eRF3-GTP complex binds to a stop codon in the ribosomal A-site. ETF1/ERF1 is responsible for stop codon recognition and inducing hydrolysis of peptidyl-tRNA. Following GTP hydrolysis, eRF3 (GSPT1/ERF3A or GSPT2/ERF3B) dissociates, permitting ETF1/eRF1 to accommodate fully in the A-site, followed by hydrolysis of peptidyl-tRNA. Component of the transient SURF complex which recruits UPF1 to stalled ribosomes in the context of nonsense-mediated decay (NMD) of mRNAs containing premature stop codons. Required for SHFL-mediated translation termination which inhibits programmed ribosomal frameshifting (-1PRF) of mRNA from viruses and cellular genes. The chain is Eukaryotic peptide chain release factor subunit 1 (ETF1) from Bos taurus (Bovine).